The primary structure comprises 280 residues: Bicarbonate transport system permease protein CmpB (280 aa).

Transmembrane regions (helical) follow at residues 32–52, 99–119, 126–146, 153–173, 198–218, 219–239, and 251–271; these read PIFGILGFLLLWQLISSAGLI, YSLAAIVGISTGILVGTQPLL, IFQFLRMVAPLAWVPIALVAL, AIFVIFITSVWPILINTTEGV, ILIPSALPYIFTGLRIAIGLA, WLAIIAAEIVMSGIVGIGFFI, and IILAVFYIGAVGLLLDRGIAY. The 179-residue stretch at 88–266 folds into the ABC transmembrane type-1 domain; that stretch reads TLASLGRVAQ…YIGAVGLLLD (179 aa).

This sequence belongs to the binding-protein-dependent transport system permease family. As to quaternary structure, the complex is composed of two ATP-binding proteins (CmpC and CmpD), a transmembrane protein (CmpB) and a solute-binding protein (CmpA).

It is found in the cell inner membrane. Part of the ABC transporter complex CmpABCD involved in bicarbonate transport. Probably responsible for the translocation of the substrate across the membrane. In Synechocystis sp. (strain ATCC 27184 / PCC 6803 / Kazusa), this protein is Bicarbonate transport system permease protein CmpB (cmpB).